A 417-amino-acid chain; its full sequence is Sulfate adenylyltransferase (417 aa).

This sequence belongs to the sulfate adenylyltransferase family.

The enzyme catalyses sulfate + ATP + H(+) = adenosine 5'-phosphosulfate + diphosphate. Its pathway is sulfur metabolism; hydrogen sulfide biosynthesis; sulfite from sulfate: step 1/3. This Psychrobacter cryohalolentis (strain ATCC BAA-1226 / DSM 17306 / VKM B-2378 / K5) protein is Sulfate adenylyltransferase.